The primary structure comprises 381 residues: Chaperone protein DnaJ (381 aa).

The J domain occupies 5–70 (DFYEVLGVSR…QKKAAYDQYG (66 aa)). The segment at 136–214 (GVSKEIEVPT…CHGQGRKQKT (79 aa)) adopts a CR-type zinc-finger fold. 8 residues coordinate Zn(2+): C149, C152, C166, C169, C188, C191, C202, and C205. 4 CXXCXGXG motif repeats span residues 149-156 (CDICDGSG), 166-173 (CGTCHGHG), 188-195 (CPTCNGKG), and 202-209 (CNSCHGQG).

The protein belongs to the DnaJ family. In terms of assembly, homodimer. It depends on Zn(2+) as a cofactor.

It is found in the cytoplasm. Participates actively in the response to hyperosmotic and heat shock by preventing the aggregation of stress-denatured proteins and by disaggregating proteins, also in an autonomous, DnaK-independent fashion. Unfolded proteins bind initially to DnaJ; upon interaction with the DnaJ-bound protein, DnaK hydrolyzes its bound ATP, resulting in the formation of a stable complex. GrpE releases ADP from DnaK; ATP binding to DnaK triggers the release of the substrate protein, thus completing the reaction cycle. Several rounds of ATP-dependent interactions between DnaJ, DnaK and GrpE are required for fully efficient folding. Also involved, together with DnaK and GrpE, in the DNA replication of plasmids through activation of initiation proteins. The chain is Chaperone protein DnaJ from Vibrio atlanticus (strain LGP32) (Vibrio splendidus (strain Mel32)).